The primary structure comprises 330 residues: Serine/threonine-protein phosphatase PP1-alpha catalytic subunit (330 aa).

Position 2 is an N-acetylserine (Ser-2). Phosphoserine occurs at positions 2 and 22. Mn(2+) contacts are provided by Asp-64, His-66, Asp-92, and Asn-124. His-125 serves as the catalytic Proton donor. 2 residues coordinate Mn(2+): His-173 and His-248. Lys-305 is subject to N6-acetyllysine. Tyr-306 is subject to Phosphotyrosine. Positions 306–330 (YGQFSGLNPGGRPITPPRNSAKAKK) are disordered. Phosphothreonine is present on Thr-320. Ser-325 bears the Phosphoserine mark.

Belongs to the PPP phosphatase family. PP-1 subfamily. PP1 comprises a catalytic subunit, PPP1CA, PPP1CB or PPP1CC, which is folded into its native form by inhibitor 2 and glycogen synthetase kinase 3, and then complexed to one or several targeting or regulatory subunits. PPP1R12A, PPP1R12B and PPP1R12C mediate binding to myosin. PPP1R3A (in skeletal muscle), PPP1R3B (in liver), PPP1R3C, PPP1R3D and PPP1R3F (in brain) mediate binding to glycogen. Interacts with PPP1R39. Interacts with BTBD10. Interacts with KCTD20. Interacts with PPP1R9A and PPP1R9B. Part of a complex containing PPP1R15B, PP1 and NCK1/2. Interacts with PHACTR4; which acts as an activator of PP1 activity. Interacts with PPP1R15A and PPP1R15B; the interactions mediate binding to EIF2S1. Interacts with PPP1R7. Interacts with YLPM1. Forms a complex with ILF2, ILF3, YLPM1, KHDRBS1, RBMX and NCOA5. Interacts with NOM1 and PPP1R8. Interacts with PPP1R16B. Interacts with RPSA only in the presence of PPP1R16B. Component of the PNUTS-PP1 phosphatase complex, composed of PPP1R10/PNUTS, TOX4, WDR82, and PPP1CA or PPP1CB or PPP1CC. Interacts with PPP1R10/PNUTS and PPP1R8. Interacts with WDR82 in the presence of PPP1R10/PNUTS. Interacts with TRIM28; the interaction dephosphorylates TRIM28 on 'Ser-824' and forms a complex at the p21 promoter site. Interacts with isoform 1 and isoform 4 of NEK2. Interacts with FER; this promotes phosphorylation at Thr-320. Interacts with DAB2; the interaction is mutually exclusive with the AXIN1:PPP1CA interaction. Interacts with FOXP3. Interacts with CENPA. Interacts with ATG16L1. Found in a complex with PPP1CA, PPP1CC, SHC1 and PEAK1. Interacts with tensin TNS1. Interacts with SAXO4, PPP1R21, PPP1R26, PPP1R27, PPP1R35, PPP1R36, PPP1R37, SH3RF2, ELFN1 and ELFN2. Interacts with TPRN; the interaction results in inhibition of PPC1A phosphatase activity. Interacts with SKA1 (via C-terminus); the interaction is direct and required for the recruitment of PP1 to the kinetochore. Interacts with the KNL1 complex subunit KNL1; the interaction is direct and mutually exclusive with KNL1 binding to microtubules. Component of the SHOC2-MRAS-PP1c (SMP) complex consisting of SHOC2, GTP-bound M-Ras/MRAS and the catalytic subunit of protein phosphatase 1 (either PPP1CA, PPP1CB or PPP1CC). SHOC2 and PP1c preferably bind M-Ras/MRAS, but they also bind K-Ras/KRAS, N-Ras/NRAS and H-Ras/HRAS; these interactions are GTP-dependent and both SHOC2 and PP1c are required to form a stable complex. Interacts with SHOC2 in the absence of Ras GTPases. As to quaternary structure, (Microbial infection) Interacts with HHV-1 ICP34.5. In terms of assembly, (Microbial infection) Interacts with Venezuelan equine encephalitis virus (VEEV) capsid protein; this interaction dephosphorylates the capsid protein, which increases its ability to bind to the viral genome. The cofactor is Fe cation. Mn(2+) serves as cofactor. In terms of processing, phosphorylated. Dephosphorylated at Thr-320 in the presence of ionizing radiation.

The protein localises to the cytoplasm. The protein resides in the nucleus. Its subcellular location is the nucleoplasm. It is found in the nucleolus. The catalysed reaction is O-phospho-L-seryl-[protein] + H2O = L-seryl-[protein] + phosphate. It catalyses the reaction O-phospho-L-threonyl-[protein] + H2O = L-threonyl-[protein] + phosphate. Its activity is regulated as follows. The phosphatase activity of the PPP1R15A-PP1 complex toward EIF2S1 is specifically inhibited by Salubrinal, a drug that protects cells from endoplasmic reticulum stress. Functionally, protein phosphatase that associates with over 200 regulatory proteins to form highly specific holoenzymes which dephosphorylate hundreds of biological targets. Protein phosphatase 1 (PP1) is essential for cell division, transcription elongation, and participates in the regulation of glycogen metabolism, muscle contractility and protein synthesis. Involved in regulation of ionic conductances and long-term synaptic plasticity. May play an important role in dephosphorylating substrates such as the postsynaptic density-associated Ca(2+)/calmodulin dependent protein kinase II. Catalytic component of the PNUTS-PP1 protein phosphatase complex, a protein phosphatase 1 (PP1) complex that promotes RNA polymerase II transcription pause-release, allowing transcription elongation: the PNUTS-PP1 complex mediates the release of RNA polymerase II from promoter-proximal region of genes by catalyzing dephosphorylation of proteins involved in transcription, such as AFF4, CDK9, MEPCE, INTS12, NCBP1, POLR2M/GDOWN1 and SUPT6H. The PNUTS-PP1 complex also regulates transcription termination by mediating dephosphorylation of SUPT5H in termination zones downstream of poly(A) sites, thereby promoting deceleration of RNA polymerase II transcription. PNUTS-PP1 complex is also involved in the response to replication stress by mediating dephosphorylation of POLR2A at 'Ser-5' of the CTD, promoting RNA polymerase II degradation. PNUTS-PP1 also plays a role in the control of chromatin structure and cell cycle progression during the transition from mitosis into interphase. Regulates NEK2 function in terms of kinase activity and centrosome number and splitting, both in the presence and absence of radiation-induced DNA damage. Regulator of neural tube and optic fissure closure, and enteric neural crest cell (ENCCs) migration during development. In balance with CSNK1D and CSNK1E, determines the circadian period length, through the regulation of the speed and rhythmicity of PER1 and PER2 phosphorylation. May dephosphorylate CSNK1D and CSNK1E. Dephosphorylates the 'Ser-418' residue of FOXP3 in regulatory T-cells (Treg) from patients with rheumatoid arthritis, thereby inactivating FOXP3 and rendering Treg cells functionally defective. Dephosphorylates CENPA. Dephosphorylates the 'Ser-139' residue of ATG16L1 causing dissociation of ATG12-ATG5-ATG16L1 complex, thereby inhibiting autophagy. Together with PPP1CC (PP1-gamma subunit), dephosphorylates IFIH1/MDA5 and RIG-I leading to their activation and a functional innate immune response. Core component of the SHOC2-MRAS-PP1c (SMP) holophosphatase complex that regulates the MAPK pathway activation. The SMP complex specifically dephosphorylates the inhibitory phosphorylation at 'Ser-259' of RAF1 kinase, 'Ser-365' of BRAF kinase and 'Ser-214' of ARAF kinase, stimulating their kinase activities. The SMP complex enhances the dephosphorylation activity and substrate specificity of PP1c. In terms of biological role, (Microbial infection) Necessary for alphaviruses replication. The sequence is that of Serine/threonine-protein phosphatase PP1-alpha catalytic subunit (PPP1CA) from Homo sapiens (Human).